The chain runs to 246 residues: Ribonuclease 3 (246 aa).

The RNase III domain maps to Leu16 to Gly144. Glu57 contacts Mg(2+). The active site involves Asp61. Residues Asp130 and Glu133 each coordinate Mg(2+). Glu133 is a catalytic residue. A DRBM domain is found at Asp171–Ser240.

Belongs to the ribonuclease III family. As to quaternary structure, homodimer. Mg(2+) is required as a cofactor.

The protein localises to the cytoplasm. It catalyses the reaction Endonucleolytic cleavage to 5'-phosphomonoester.. In terms of biological role, digests double-stranded RNA. Involved in the processing of primary rRNA transcript to yield the immediate precursors to the large and small rRNAs (23S and 16S). Processes some mRNAs, and tRNAs when they are encoded in the rRNA operon. Processes pre-crRNA and tracrRNA of type II CRISPR loci if present in the organism. This chain is Ribonuclease 3, found in Treponema denticola (strain ATCC 35405 / DSM 14222 / CIP 103919 / JCM 8153 / KCTC 15104).